The chain runs to 156 residues: Phosphopantetheine adenylyltransferase (156 aa).

Residue Ser9 participates in substrate binding. Residues 9 to 10 (SF) and His17 contribute to the ATP site. Substrate-binding residues include Lys41, Ile74, and Lys88. ATP contacts are provided by residues 89–91 (GLR), Glu99, and 123–129 (LLHVSSS).

This sequence belongs to the bacterial CoaD family. In terms of assembly, homohexamer. Mg(2+) is required as a cofactor.

Its subcellular location is the cytoplasm. It carries out the reaction (R)-4'-phosphopantetheine + ATP + H(+) = 3'-dephospho-CoA + diphosphate. The protein operates within cofactor biosynthesis; coenzyme A biosynthesis; CoA from (R)-pantothenate: step 4/5. Functionally, reversibly transfers an adenylyl group from ATP to 4'-phosphopantetheine, yielding dephospho-CoA (dPCoA) and pyrophosphate. The protein is Phosphopantetheine adenylyltransferase of Kocuria rhizophila (strain ATCC 9341 / DSM 348 / NBRC 103217 / DC2201).